We begin with the raw amino-acid sequence, 295 residues long: Proline-rich protein 18 (295 aa).

Positions 1–13 (MPFPPMPPPPAPA) are enriched in pro residues. Positions 1 to 133 (MPFPPMPPPP…GAGPCPDSAA (133 aa)) are disordered. The span at 14 to 29 (PGAQAARQLPRRPCAA) shows a compositional bias: low complexity. Position 47 is a phosphoserine (Ser-47). Arg-83 is modified (omega-N-methylarginine). Low complexity predominate over residues 103–126 (ARTTYAATSAGTGTTAAGTSSGAG). Position 172 is an asymmetric dimethylarginine (Arg-172). Positions 181–192 (ARAAGPRRGGPA) are enriched in low complexity. Residues 181 to 227 (ARAAGPRRGGPASDPDAPPTAGQGRRAPPPGAQLLHGGLQVPQLSPR) are disordered. Arg-188 bears the Omega-N-methylarginine mark.

This is Proline-rich protein 18 (PRR18) from Homo sapiens (Human).